The sequence spans 488 residues: DELTA-alicitoxin-Pse2b (488 aa).

A signal peptide spans 1 to 21 (MSKPIIFLLTAFVVLTDLGAT). The region spanning 24 to 344 (TEKVEVKAKP…GYLNFDCAYE (321 aa)) is the MACPF domain. Residues 369 to 398 (VCKLGPEGCHSDDDCESDDLIYCACCGDSC) enclose the EGF-like domain. Cystine bridges form between Cys-370-Cys-383, Cys-377-Cys-391, and Cys-393-Cys-398.

It localises to the secreted. The protein resides in the nematocyst. Causes lethal toxicity to the shrimp Palaemon paucidence, and hemolytic activity toward sheep red blood cells. This is DELTA-alicitoxin-Pse2b from Phyllodiscus semoni (Night anemone).